Consider the following 272-residue polypeptide: Phosphatidylglycerol--prolipoprotein diacylglyceryl transferase (272 aa).

4 helical membrane passes run 15–35 (LGPL…LVLF), 53–73 (AFAV…WHVV), 94–114 (GLGF…IAKI), and 117–137 (VPPF…LCFA). Arginine 138 contacts a 1,2-diacyl-sn-glycero-3-phospho-(1'-sn-glycerol). The next 3 helical transmembrane spans lie at 174–194 (FHPI…ILLV), 199–219 (VFVK…VLYG), and 237–257 (FGLD…VLIA).

This sequence belongs to the Lgt family.

It localises to the cell membrane. The catalysed reaction is L-cysteinyl-[prolipoprotein] + a 1,2-diacyl-sn-glycero-3-phospho-(1'-sn-glycerol) = an S-1,2-diacyl-sn-glyceryl-L-cysteinyl-[prolipoprotein] + sn-glycerol 1-phosphate + H(+). Its pathway is protein modification; lipoprotein biosynthesis (diacylglyceryl transfer). Functionally, catalyzes the transfer of the diacylglyceryl group from phosphatidylglycerol to the sulfhydryl group of the N-terminal cysteine of a prolipoprotein, the first step in the formation of mature lipoproteins. This Tropheryma whipplei (strain TW08/27) (Whipple's bacillus) protein is Phosphatidylglycerol--prolipoprotein diacylglyceryl transferase.